The primary structure comprises 172 residues: Endoribonuclease YbeY (172 aa).

Zn(2+)-binding residues include His-137, His-141, and His-147.

Belongs to the endoribonuclease YbeY family. Zn(2+) serves as cofactor.

Its subcellular location is the cytoplasm. Single strand-specific metallo-endoribonuclease involved in late-stage 70S ribosome quality control and in maturation of the 3' terminus of the 16S rRNA. The chain is Endoribonuclease YbeY from Dehalococcoides mccartyi (strain ATCC BAA-2266 / KCTC 15142 / 195) (Dehalococcoides ethenogenes (strain 195)).